We begin with the raw amino-acid sequence, 255 residues long: MTFLAIDVGNTRLKWALYTHPHRDAPLLAQGAEFLDNIDKLADGAWATLTPPTHMLGCIVAGDAVRRRVEAQMELWDVAPQWVVASAGEAGLTNGYDYPARLGADRWVAMIGAWHHAFSTGPARPLVVVMVGTAVTVDAIDASGKFLGGLILPGHGIMLRALESGTAGLHVPTGEVREFPTNTSDALTSGGTFAIAGAVNCMVQHLRDHCGTEPKCIMAGGAGWKMAPSMSVQFELVDNLIFDGLLEMAARRFID.

7–14 lines the ATP pocket; it reads DVGNTRLK. Residues Tyr-96 and 103–106 each bind substrate; that span reads GADR. The Proton acceptor role is filled by Asp-105. An ATP-binding site is contributed by Thr-133. Residue Thr-183 participates in substrate binding.

Belongs to the type III pantothenate kinase family. As to quaternary structure, homodimer. It depends on NH4(+) as a cofactor. K(+) is required as a cofactor.

It is found in the cytoplasm. The catalysed reaction is (R)-pantothenate + ATP = (R)-4'-phosphopantothenate + ADP + H(+). Its pathway is cofactor biosynthesis; coenzyme A biosynthesis; CoA from (R)-pantothenate: step 1/5. Catalyzes the phosphorylation of pantothenate (Pan), the first step in CoA biosynthesis. This Albidiferax ferrireducens (strain ATCC BAA-621 / DSM 15236 / T118) (Rhodoferax ferrireducens) protein is Type III pantothenate kinase.